Here is a 348-residue protein sequence, read N- to C-terminus: Small ribosomal subunit biogenesis GTPase RsgA (348 aa).

A disordered region spans residues 1-32 (MAKQKLTQNQKRRIHSNNAKALDRHRRQTKKQ). The region spanning 106–274 (KNELSRPDYY…LIDSPGIREF (169 aa)) is the CP-type G domain. GTP is bound by residues 162-165 (NKID) and 216-224 (GQSGVGKSS). Zn(2+) contacts are provided by Cys-298, Cys-303, His-305, and Cys-311.

This sequence belongs to the TRAFAC class YlqF/YawG GTPase family. RsgA subfamily. In terms of assembly, monomer. Associates with 30S ribosomal subunit, binds 16S rRNA. Zn(2+) serves as cofactor.

The protein localises to the cytoplasm. In terms of biological role, one of several proteins that assist in the late maturation steps of the functional core of the 30S ribosomal subunit. Helps release RbfA from mature subunits. May play a role in the assembly of ribosomal proteins into the subunit. Circularly permuted GTPase that catalyzes slow GTP hydrolysis, GTPase activity is stimulated by the 30S ribosomal subunit. The polypeptide is Small ribosomal subunit biogenesis GTPase RsgA (Actinobacillus succinogenes (strain ATCC 55618 / DSM 22257 / CCUG 43843 / 130Z)).